A 194-amino-acid chain; its full sequence is Ribonuclease HII (194 aa).

Residues 3–193 enclose the RNase H type-2 domain; sequence ILTAGVDEAG…VRNLLAQQAL (191 aa). Positions 9, 10, and 101 each coordinate a divalent metal cation.

It belongs to the RNase HII family. The cofactor is Mn(2+). Mg(2+) serves as cofactor.

It localises to the cytoplasm. The enzyme catalyses Endonucleolytic cleavage to 5'-phosphomonoester.. Its function is as follows. Endonuclease that specifically degrades the RNA of RNA-DNA hybrids. This Neisseria meningitidis serogroup B (strain ATCC BAA-335 / MC58) protein is Ribonuclease HII (rnhB).